The following is a 437-amino-acid chain: Eukaryotic peptide chain release factor subunit 1 (437 aa).

Positions 61–64 (NIKS) match the NIKS motif; plays an important role in translational termination motif.

It belongs to the eukaryotic release factor 1 family. Component of the eRF1-eRF3-GTP ternary complex, composed of ETF1/ERF1 and eRF3 (GSPT1/ERF3A or GSPT2/ERF3B) and GTP.

It localises to the cytoplasm. In terms of biological role, component of the eRF1-eRF3-GTP ternary complex, a ternary complex that mediates translation termination in response to the termination codons. The eRF1-eRF3-GTP complex binds to a stop codon in the ribosomal A-site. ETF1/ERF1 is responsible for stop codon recognition and inducing hydrolysis of peptidyl-tRNA. Following GTP hydrolysis, eRF3 (GSPT1/ERF3A or GSPT2/ERF3B) dissociates, permitting ETF1/eRF1 to accommodate fully in the A-site, followed by hydrolysis of peptidyl-tRNA. In Xenopus tropicalis (Western clawed frog), this protein is Eukaryotic peptide chain release factor subunit 1 (etf1).